We begin with the raw amino-acid sequence, 160 residues long: Small ribosomal subunit protein uS19 (160 aa).

Belongs to the universal ribosomal protein uS19 family.

In terms of biological role, protein S19 forms a complex with S13 that binds strongly to the 16S ribosomal RNA. The polypeptide is Small ribosomal subunit protein uS19 (Pyrobaculum islandicum (strain DSM 4184 / JCM 9189 / GEO3)).